Here is a 195-residue protein sequence, read N- to C-terminus: dITP/XTP pyrophosphatase (195 aa).

S7–K12 lines the substrate pocket. Mg(2+) is bound by residues E38 and D68. D68 acts as the Proton acceptor in catalysis. Substrate-binding positions include S69, F150–D153, K173, and H178–R179.

The protein belongs to the HAM1 NTPase family. In terms of assembly, homodimer. Requires Mg(2+) as cofactor.

The catalysed reaction is XTP + H2O = XMP + diphosphate + H(+). The enzyme catalyses dITP + H2O = dIMP + diphosphate + H(+). It carries out the reaction ITP + H2O = IMP + diphosphate + H(+). In terms of biological role, pyrophosphatase that catalyzes the hydrolysis of nucleoside triphosphates to their monophosphate derivatives, with a high preference for the non-canonical purine nucleotides XTP (xanthosine triphosphate), dITP (deoxyinosine triphosphate) and ITP. Seems to function as a house-cleaning enzyme that removes non-canonical purine nucleotides from the nucleotide pool, thus preventing their incorporation into DNA/RNA and avoiding chromosomal lesions. The sequence is that of dITP/XTP pyrophosphatase from Nautilia profundicola (strain ATCC BAA-1463 / DSM 18972 / AmH).